We begin with the raw amino-acid sequence, 201 residues long: Small ribosomal subunit protein uS4 (201 aa).

One can recognise an S4 RNA-binding domain in the interval 91-157 (SRLDNVIYRA…VPFQIARETA (67 aa)).

This sequence belongs to the universal ribosomal protein uS4 family. As to quaternary structure, part of the 30S ribosomal subunit. Contacts protein S5. The interaction surface between S4 and S5 is involved in control of translational fidelity.

Functionally, one of the primary rRNA binding proteins, it binds directly to 16S rRNA where it nucleates assembly of the body of the 30S subunit. Its function is as follows. With S5 and S12 plays an important role in translational accuracy. The chain is Small ribosomal subunit protein uS4 from Mycobacterium tuberculosis (strain ATCC 25177 / H37Ra).